The sequence spans 629 residues: Bifunctional protein ArgHA (629 aa).

The interval 1-499 (MALWGGRFSQ…NLPRSRSDLV (499 aa)) is argininosuccinate lyase. In terms of domain architecture, N-acetyltransferase spans 464 to 598 (ISIRAARLTD…EKVLKDCDMC (135 aa)). Residues 500 to 629 (KAVGTFAVTE…INLKAEKLAS (130 aa)) form an amino-acid acetyltransferase region.

This sequence in the N-terminal section; belongs to the lyase 1 family. Argininosuccinate lyase subfamily. It in the C-terminal section; belongs to the acetyltransferase family. ArgA subfamily.

It localises to the cytoplasm. The catalysed reaction is 2-(N(omega)-L-arginino)succinate = fumarate + L-arginine. It catalyses the reaction L-glutamate + acetyl-CoA = N-acetyl-L-glutamate + CoA + H(+). It participates in amino-acid biosynthesis; L-arginine biosynthesis; N(2)-acetyl-L-ornithine from L-glutamate: step 1/4. It functions in the pathway amino-acid biosynthesis; L-arginine biosynthesis; L-arginine from L-ornithine and carbamoyl phosphate: step 3/3. The polypeptide is Bifunctional protein ArgHA (argHA) (Moritella abyssi).